Consider the following 138-residue polypeptide: Ribosome-binding factor A (138 aa).

The disordered stretch occupies residues D119–D138.

This sequence belongs to the RbfA family. Monomer. Binds 30S ribosomal subunits, but not 50S ribosomal subunits or 70S ribosomes.

The protein localises to the cytoplasm. Functionally, one of several proteins that assist in the late maturation steps of the functional core of the 30S ribosomal subunit. Associates with free 30S ribosomal subunits (but not with 30S subunits that are part of 70S ribosomes or polysomes). Required for efficient processing of 16S rRNA. May interact with the 5'-terminal helix region of 16S rRNA. This Alkaliphilus metalliredigens (strain QYMF) protein is Ribosome-binding factor A.